The following is a 607-amino-acid chain: UvrABC system protein C (607 aa).

The GIY-YIG domain occupies 16-94 (GRPGVYRMFD…IKEWRPPYNI (79 aa)). A UVR domain is found at 203–238 (NALSDELNASMEKAAMALDFERAAELRDQVALLRRV).

It belongs to the UvrC family. In terms of assembly, interacts with UvrB in an incision complex.

It is found in the cytoplasm. Functionally, the UvrABC repair system catalyzes the recognition and processing of DNA lesions. UvrC both incises the 5' and 3' sides of the lesion. The N-terminal half is responsible for the 3' incision and the C-terminal half is responsible for the 5' incision. This Pseudomonas syringae pv. syringae (strain B728a) protein is UvrABC system protein C.